A 319-amino-acid chain; its full sequence is Proline hydroxylase buaE (319 aa).

The Fe2OG dioxygenase domain occupies Asn-168–Pro-280. Fe cation-binding residues include His-195, Asp-197, and His-255. Residue Arg-271 participates in 2-oxoglutarate binding.

It belongs to the iron/ascorbate-dependent oxidoreductase family. Requires Fe(2+) as cofactor.

Its pathway is mycotoxin biosynthesis. In terms of biological role, proline hydroxylase; part of the gene cluster that mediates the biosynthesis of burnettramic acids, an unusual class of bolaamphiphilic pyrrolizidinediones that display potent antibacterial, antifungal, and cytotoxic activities. The first step of the biosynthesis of burnettramic acids is the hydroxylation of proline by the proline hydroxylase buaE to generate 4-hydroxyproline. The PKS-NRPS buaA and trans-enoyl reductase buaC construct the highly reduced polyketide chain, and the condensation (C) domain of buaA then catalyzes the amide bond formation with the activated 4-hydroxyproline. This is followed by the R domain releasing the nascent polyketide-peptide directly via a Dieckmann condensation to afford a tetramic acid fused to the hydroxyproline, generating the bicyclic pyrrolidinedione moiety. The cytochrome P450 monooxygenases buaD and buaG are likely responsible for the multiple hydroxylations on the polyketide chain and its terminus, although in the heterologous context, buaD does not appear to be required. Therefore, while buaG may be a multifunctional cytochrome P450 monooxygenase, it cannot be ruled out that the two secondary alcohols on the polyketide chain could have an acetate origin. Finally, the glycosyltransferase buaB transfers beta-D-mannose to the aglycone burnettramic acid A to form burnettramic acid A. Burnettramic acid B is a minor cis-pyrrolizidine epimer of burnettramic acid A and it is likely that small amounts of it form naturally in acidic environments. This chain is Proline hydroxylase buaE, found in Petromyces alliaceus (Aspergillus alliaceus).